A 607-amino-acid chain; its full sequence is Dopamine receptor 3 (607 aa).

Topologically, residues 1 to 23 are extracellular; that stretch reads MLAGQHHVTDIESPLMVVLWRVA. The helical transmembrane segment at 24-44 threads the bilayer; that stretch reads AGVFLPLVPTMAVFGNVLVIM. The Cytoplasmic segment spans residues 45–58; the sequence is SVFRERSLQTVTNM. Residues 59 to 79 traverse the membrane as a helical segment; sequence LIVSLAVSDFMVAIGVMSFGV. Topologically, residues 80–96 are extracellular; it reads YYEWNDFKWGLGSFFCH. An intrachain disulfide couples Cys95 to Cys173. Residues 97 to 117 traverse the membrane as a helical segment; sequence VYQALDVACSTASILNLLAIS. The Cytoplasmic segment spans residues 118-141; it reads LDRYIAIGHPISYAQYGARGGRAM. Residues 142 to 162 traverse the membrane as a helical segment; it reads ISITIVWGVSVAVALPLLLGV. The Extracellular portion of the chain corresponds to 163-182; that stretch reads NPMEENDLQECELANPYFNM. A helical membrane pass occupies residues 183–203; it reads ISSIFSFFIPCIAMIILYTII. The Cytoplasmic segment spans residues 204–523; that stretch reads FRRLRQRERA…TKQMRREHKA (320 aa). The disordered stretch occupies residues 402–435; sequence VPSIQDEKKLSQKSNDLPFSHQNGTHKQKLLPNP. The segment covering 413–424 has biased composition (polar residues); it reads QKSNDLPFSHQN. The chain crosses the membrane as a helical span at residues 524 to 544; sequence TVTLAVVLAVFLFCWLPFFVL. Topologically, residues 545 to 558 are extracellular; sequence HLSNSICLIIDENS. A helical transmembrane segment spans residues 559–579; sequence ACVGFLPLYLATWLGYLNSSL. At 580–607 the chain is on the cytoplasmic side; it reads NPLIYTVFDQRFRNAFRNILSCGIFKKR.

Belongs to the G-protein coupled receptor 1 family. As to expression, expressed in the neurons of the head, ventral cord and tail with weak expression observed in body wall muscles and PVD neurons. In the ventral cord, expressed strongly in GABAergic neurons with weaker expression in cholinergic motor neurons. Expressed in cholinergic SIA neurons and octopaminergic RIC neurons. In males, expressed in the dorsal and ventral spicule protractor and retractor muscles, and the sensory post-cloacal sensilla B (PCB) neuron. Expressed in the head acetylcholine neurons. Expressed in the AVA, AVB, AVD and AVE command interneurons. Expressed in premotor interneurons.

It is found in the cell membrane. Functionally, G-protein coupled receptor which binds to the neurotransmitter dopamine with high affinity leading to the activation of an associated G-protein and downstream signaling pathways. Couples to G-proteins to inhibit adenylate cyclase (AC) activity and cAMP production. Antagonizes the D1-like dopamine receptor dop-1 to negatively regulate the rate of locomotion. Negatively regulates locomotion through the activation of goa-1 subunit proteins which inactivates the unc-77/nca-1 and nca-2 ion-channels in the command interneurons. Inhibits early-stage swimming by modulating the unc-77/nca-1 and nca-2 ion channels of premotor interneurons. In GABAergic, RIC, and SIA neurons, antagonizes the function of dop-1 to play a role in behavioral plasticity and regulate the decision-making process when conflicting alternatives are present. Antagonizes octopamine signaling in response to food by promoting the dopamine-mediated suppression of crh-1/CREB1 transcription factor activation in cholinergic SIA neurons. This is most likely in association with the G(o)-alpha G-protein subunit goa-1. Promotes male mating behavior by antagonizing acetylcholine signaling to control the protrusion of copulatory spicules from the tail of males during hermaphrodite vulval location. Under mitochondria stress, plays a role in bacterial preference, resulting in learned avoidance behavior. This chain is Dopamine receptor 3, found in Caenorhabditis elegans.